The primary structure comprises 337 residues: Monoacylglycerol lipase abhd6-A (337 aa).

The Extracellular segment spans residues 1–19 (MDLDVLNMFLVAGGTLLVP). The chain crosses the membrane as a helical; Signal-anchor for type II membrane protein span at residues 20–42 (ILAFVTSFLLWPAALIKIYYWYW). The Cytoplasmic portion of the chain corresponds to 43 to 337 (RRALGMQVKF…QSTENNKKHE (295 aa)). An AB hydrolase-1 domain is found at 73-313 (SVLMLHGFSA…CGHSVVMERP (241 aa)). Ser-148 acts as the Nucleophile in catalysis. Catalysis depends on charge relay system residues Asp-278 and His-306.

The protein belongs to the AB hydrolase superfamily.

Its subcellular location is the late endosome membrane. It localises to the lysosome membrane. The protein localises to the mitochondrion membrane. The catalysed reaction is Hydrolyzes glycerol monoesters of long-chain fatty acids.. The enzyme catalyses 1-octanoylglycerol + H2O = octanoate + glycerol + H(+). It carries out the reaction 1-decanoylglycerol + H2O = decanoate + glycerol + H(+). It catalyses the reaction 1-dodecanoylglycerol + H2O = dodecanoate + glycerol + H(+). The catalysed reaction is 1-tetradecanoylglycerol + H2O = tetradecanoate + glycerol + H(+). The enzyme catalyses 2-hexadecanoylglycerol + H2O = glycerol + hexadecanoate + H(+). It carries out the reaction 2-(9Z-octadecenoyl)-glycerol + H2O = glycerol + (9Z)-octadecenoate + H(+). It catalyses the reaction 1-(9Z-octadecenoyl)-glycerol + H2O = glycerol + (9Z)-octadecenoate + H(+). The catalysed reaction is 2-(9Z,12Z-octadecadienoyl)-glycerol + H2O = (9Z,12Z)-octadecadienoate + glycerol + H(+). The enzyme catalyses 2-(5Z,8Z,11Z,14Z-eicosatetraenoyl)-glycerol + H2O = glycerol + (5Z,8Z,11Z,14Z)-eicosatetraenoate + H(+). It carries out the reaction 1-(5Z,8Z,11Z,14Z-eicosatetraenoyl)-glycerol + H2O = glycerol + (5Z,8Z,11Z,14Z)-eicosatetraenoate + H(+). It catalyses the reaction 1-(9Z,12Z-octadecadienoyl)-glycerol + H2O = (9Z,12Z)-octadecadienoate + glycerol + H(+). The catalysed reaction is 3-(9Z-octadecenoyl)-sn-glycero-1-phospho-(3'-(9Z-octadecenoyl)-1'-sn-glycerol) + H2O = 3-(9Z-octadecenoyl)-sn-glycero-1-phospho-(1'-sn-glycerol) + (9Z)-octadecenoate + H(+). The enzyme catalyses (S,S)-2-(9Z-octadecenoyl)-sn-glycero-1-phospho-(2'-(9Z-octadecenoyl)-1'-sn-glycerol) + H2O = (S,S)-2-(9Z-octadecenoyl)-sn-glycero-1-phospho-(1'-sn-glycerol) + (9Z)-octadecenoate + H(+). It carries out the reaction (R,R)-2-(9Z-octadecenoyl)-sn-glycero-3-phospho-(2'-(9Z-octadecenoyl)-3'-sn-glycerol) + H2O = (R,R)-2-(9Z-octadecenoyl)-sn-glycero-3-phospho-(3'-sn-glycerol) + (9Z)-octadecenoate + H(+). Functionally, lipase that preferentially hydrolysis medium-chain saturated monoacylglycerols including 2-arachidonoylglycerol. Through 2-arachidonoylglycerol degradation may regulate endocannabinoid signaling pathways. Also has a lysophosphatidyl lipase activity with a preference for lysophosphatidylglycerol among other lysophospholipids. Also able to degrade bis(monoacylglycero)phosphate (BMP) and constitutes the major enzyme for BMP catabolism. BMP, also known as lysobisphosphatidic acid, is enriched in late endosomes and lysosomes and plays a key role in the formation of intraluminal vesicles and in lipid sorting. The polypeptide is Monoacylglycerol lipase abhd6-A (abhd6-a) (Xenopus laevis (African clawed frog)).